We begin with the raw amino-acid sequence, 254 residues long: Ankyrin repeat domain-containing protein 7 (254 aa).

ANK repeat units follow at residues 58–87 (KYRTPLHLACANGHTDVVLFLIEQQCKINV), 91–120 (ENKSPLIKAVQCQNEDCATILLNFGADPDL), 124–153 (RYNTVLHYAVCGQSLSLVEKLLEYEADLEA), 157–186 (DGYTPLLVAVINNNPKMVKFLLEKGADVNA), and 190–219 (YQRTALILAVSGEPPCLVKLLLQQGVELCY).

As to expression, testis specific.

In Homo sapiens (Human), this protein is Ankyrin repeat domain-containing protein 7 (ANKRD7).